A 548-amino-acid polypeptide reads, in one-letter code: Leucine-rich repeat LGI family member 3 (548 aa).

The N-terminal stretch at 1 to 30 (MAGLRARRGPGRRLLVLSTLGFCLMLQVSA) is a signal peptide. The LRRNT domain occupies 31–64 (KRPPKTPPCPPSCSCTRDTAFCVDSKSVPKNLPS). 3 LRR repeats span residues 89–110 (LLQFLLLNSNKFTLIGDNAFIG), 113–134 (HLQYLFIENNDIWALSKFTFRG), and 137–158 (SLTHLSLANNNLQTLPRDIFRP). Positions 170 to 220 (NALNCDCKVKWLVEWLAHTNTTVAPIYCASPPRFQEHKVQDLPLREFDCIT) constitute an LRRCT domain. An N-linked (GlcNAc...) asparagine glycan is attached at N189. EAR repeat units follow at residues 222–264 (DFVL…KWDY) and 268–310 (QLRD…HWDP). Residue N311 is glycosylated (N-linked (GlcNAc...) asparagine). 5 EAR repeats span residues 314 to 361 (RFTK…RWHQ), 363 to 406 (GFYS…QWSR), 410 to 453 (QFVA…RWEG), 455 to 497 (RFSE…QWDE), and 501 to 543 (KFVR…RHVV).

In terms of assembly, interacts with STX1A. As to expression, brain.

It localises to the secreted. Its subcellular location is the cytoplasmic vesicle. The protein resides in the secretory vesicle. The protein localises to the synaptic vesicle. It is found in the synapse. It localises to the synaptosome. Its subcellular location is the cell projection. The protein resides in the axon. Functionally, may participate in the regulation of neuronal exocytosis. The chain is Leucine-rich repeat LGI family member 3 (Lgi3) from Mus musculus (Mouse).